We begin with the raw amino-acid sequence, 370 residues long: MSGKRVVVGMSGGVDSSVTAWLLKQQGYEVIGLFMKNWEDDDDSEYCSTRQDWIDVVSVADLIGVDVEAVNFAAEYKDRVFADFLREYSAGRTPNPDVLCNAEIKFKAFLDHAMALGADTIATGHYARVREAGGRFELLKAFDHTKDQSYFLHRLNQAQLSRTLFPLGEMPKTRVREIAAEIGLPNARKKDSTGICFIGERPFRDFLNRYLPTKPGPIRTPDGKTIGQHIGLAFYTLGQRKGIGIGGSRDGNGDAWYVARKDMAANTLYVAQGHDHPWLLAHTVHADDLSWVAGHPPAEGTQLAAKTRYRQADAPCAVTRATGDALTLTFQQAQWAVTPGQSAVLYDGDICLGGGIIASTEAASLEQAVA.

ATP-binding positions include 9–16 and M35; that span reads GMSGGVDS. An interaction with target base in tRNA region spans residues 95 to 97; sequence NPD. C100 acts as the Nucleophile in catalysis. A disulfide bond links C100 and C196. ATP is bound at residue G124. An interaction with tRNA region spans residues 146-148; that stretch reads KDQ. Residue C196 is the Cysteine persulfide intermediate of the active site. The interval 308 to 309 is interaction with tRNA; that stretch reads RY.

Belongs to the MnmA/TRMU family.

The protein localises to the cytoplasm. The catalysed reaction is S-sulfanyl-L-cysteinyl-[protein] + uridine(34) in tRNA + AH2 + ATP = 2-thiouridine(34) in tRNA + L-cysteinyl-[protein] + A + AMP + diphosphate + H(+). Functionally, catalyzes the 2-thiolation of uridine at the wobble position (U34) of tRNA, leading to the formation of s(2)U34. This Ralstonia nicotianae (strain ATCC BAA-1114 / GMI1000) (Ralstonia solanacearum) protein is tRNA-specific 2-thiouridylase MnmA.